We begin with the raw amino-acid sequence, 265 residues long: Mlc titration factor A (265 aa).

The Zn(2+) site is built by His-111, His-148, His-152, and Glu-211.

The protein belongs to the MtfA family. Interacts with Mlc. Zn(2+) serves as cofactor.

The protein resides in the cytoplasm. Functionally, involved in the modulation of the activity of the glucose-phosphotransferase system (glucose-PTS). Interacts with the transcriptional repressor Mlc, preventing its interaction with DNA and leading to the modulation of expression of genes regulated by Mlc, including ptsG, which encodes the PTS system glucose-specific EIICB component. In terms of biological role, shows zinc-dependent metallopeptidase activity. In Salmonella paratyphi A (strain AKU_12601), this protein is Mlc titration factor A.